Here is a 328-residue protein sequence, read N- to C-terminus: Naphthalene 1,2-dioxygenase system ferredoxin--NAD(P)(+), reductase component (328 aa).

Residues Met-1 to Asp-89 form the 2Fe-2S ferredoxin-type domain. Residues Cys-35, Cys-40, Cys-43, and Cys-73 each contribute to the [2Fe-2S] cluster site. An FAD-binding FR-type domain is found at Ala-96–Arg-193.

It belongs to the bacterial ring-hydroxylating dioxygenase ferredoxin reductase component family. As to quaternary structure, the naphthalene dioxygenase (NDO) multicomponent enzyme system is composed of an electron transfer component and a dioxygenase component (iron sulfur protein (ISP)). The electron transfer component is composed of a ferredoxin reductase (NdoR) and a ferredoxin (NdoA), and the dioxygenase component is formed of a heterohexamer (trimer of heterodimers) of three large alpha subunits (NdoB) and three small beta subunits (NdoC). It depends on [2Fe-2S] cluster as a cofactor. FAD is required as a cofactor.

The catalysed reaction is 2 reduced [2Fe-2S]-[ferredoxin] + NAD(+) + H(+) = 2 oxidized [2Fe-2S]-[ferredoxin] + NADH. The enzyme catalyses 2 reduced [2Fe-2S]-[ferredoxin] + NADP(+) + H(+) = 2 oxidized [2Fe-2S]-[ferredoxin] + NADPH. The protein operates within aromatic compound metabolism; naphthalene degradation. Strongly inhibited by p-chloromercuribenzoate. Also inhibited by N-ethylmaleimide and o-phenanthroline. Component of the naphthalene dioxygenase (NDO) multicomponent enzyme system which catalyzes the incorporation of both atoms of molecular oxygen into naphthalene to form cis-(1R,2S)-dihydroxy-1,2-dihydronaphthalene. Ferredoxin reductase catalyzes the transfer of electrons from NADH to ferredoxin (NdoA). NADPH is also effective but yields only 39% of the activity obtained with NADH. Also able to catalyze the cis-dihydroxylation of biphenyl and phenanthrene. The sequence is that of Naphthalene 1,2-dioxygenase system ferredoxin--NAD(P)(+), reductase component (ndoR) from Pseudomonas putida (Arthrobacter siderocapsulatus).